Here is a 143-residue protein sequence, read N- to C-terminus: Putative pre-16S rRNA nuclease (143 aa).

Belongs to the YqgF nuclease family.

Its subcellular location is the cytoplasm. Functionally, could be a nuclease involved in processing of the 5'-end of pre-16S rRNA. This is Putative pre-16S rRNA nuclease from Lactobacillus gasseri (strain ATCC 33323 / DSM 20243 / BCRC 14619 / CIP 102991 / JCM 1131 / KCTC 3163 / NCIMB 11718 / NCTC 13722 / AM63).